We begin with the raw amino-acid sequence, 113 residues long: Protein CTLA-2-beta (113 aa).

Repeat copies occupy residues 15 to 17 and 18 to 20. The interval 15–20 is 2 X 3 AA tandem repeats of E-W-K; the sequence is EWKEWK.

The protein to the propeptide regions of cysteine proteases.

Its function is as follows. Not known, expressed in activated T-cell. The chain is Protein CTLA-2-beta (Ctla2b) from Mus musculus (Mouse).